The following is a 203-amino-acid chain: Phosphatidylglycerophosphatase B (203 aa).

Position 1 (Met-1) is a topological domain, cytoplasmic. Residues Tyr-2–Ala-17 traverse the membrane as a helical segment. Residues Ile-18 to Ser-55 lie on the Extracellular side of the membrane. The helical transmembrane segment at Ser-56–Lys-74 threads the bilayer. Topologically, residues Thr-75–Gly-78 are cytoplasmic. The chain crosses the membrane as a helical span at residues Leu-79–Ile-99. Residues Lys-96–Pro-104 are phosphatase sequence motif I. Topologically, residues Glu-100–Ser-119 are extracellular. The phosphatase sequence motif II stretch occupies residues Pro-118–His-121. Residues Gly-120–His-139 traverse the membrane as a helical segment. His-121 functions as the Proton donors in the catalytic mechanism. The Cytoplasmic segment spans residues Leu-140–His-146. Residues Lys-147–Tyr-167 traverse the membrane as a helical segment. The tract at residues Ser-164–Asp-175 is phosphatase sequence motif III. Over Leu-168–Phe-172 the chain is Extracellular. His-171 (nucleophile) is an active-site residue. Residues Val-173 to Lys-196 traverse the membrane as a helical segment. Topologically, residues Ile-197–Lys-203 are cytoplasmic.

This sequence belongs to the PA-phosphatase related phosphoesterase family.

It localises to the cell membrane. The catalysed reaction is a 1,2-diacyl-sn-glycero-3-phospho-(1'-sn-glycero-3'-phosphate) + H2O = a 1,2-diacyl-sn-glycero-3-phospho-(1'-sn-glycerol) + phosphate. Functionally, catalyzes the dephosphorylation of phosphatidylglycerophosphate (PGP) to phosphatidylglycerol. Also has undecaprenyl pyrophosphate phosphatase activity, required for the biosynthesis of the lipid carrier undecaprenyl phosphate. The sequence is that of Phosphatidylglycerophosphatase B from Bacillus subtilis (strain 168).